The primary structure comprises 209 residues: Pyroglutamyl-peptidase 1 (209 aa).

Residues E85, C149, and H168 contribute to the active site.

This sequence belongs to the peptidase C15 family. As to quaternary structure, monomer.

Its subcellular location is the cytoplasm. It carries out the reaction Release of an N-terminal pyroglutamyl group from a polypeptide, the second amino acid generally not being Pro.. Its activity is regulated as follows. Inhibited by transition metal ions including Ni(2+), Zn(2+), and Cu(2+) and by sulfhydryl-blocking agents. Removes 5-oxoproline from various penultimate amino acid residues except L-proline. The sequence is that of Pyroglutamyl-peptidase 1 (PGPEP1) from Homo sapiens (Human).